The primary structure comprises 301 residues: Polyamine aminopropyltransferase (301 aa).

Residues 4–240 form the PABS domain; that stretch reads WHWLLEWQTP…GLWGFVYGGV (237 aa). Q33 contacts S-methyl-5'-thioadenosine. 2 residues coordinate spermidine: H64 and E89. S-methyl-5'-thioadenosine contacts are provided by residues D109 and 141 to 142; that span reads DG. The active-site Proton acceptor is D159.

Belongs to the spermidine/spermine synthase family. Homodimer or homotetramer.

The protein localises to the cytoplasm. The catalysed reaction is S-adenosyl 3-(methylsulfanyl)propylamine + putrescine = S-methyl-5'-thioadenosine + spermidine + H(+). It functions in the pathway amine and polyamine biosynthesis; spermidine biosynthesis; spermidine from putrescine: step 1/1. Functionally, catalyzes the irreversible transfer of a propylamine group from the amino donor S-adenosylmethioninamine (decarboxy-AdoMet) to putrescine (1,4-diaminobutane) to yield spermidine. This chain is Polyamine aminopropyltransferase, found in Saccharolobus islandicus (strain Y.N.15.51 / Yellowstone #2) (Sulfolobus islandicus).